The chain runs to 156 residues: Small ribosomal subunit protein uS7 (156 aa).

Belongs to the universal ribosomal protein uS7 family. As to quaternary structure, part of the 30S ribosomal subunit. Contacts proteins S9 and S11.

Its function is as follows. One of the primary rRNA binding proteins, it binds directly to 16S rRNA where it nucleates assembly of the head domain of the 30S subunit. Is located at the subunit interface close to the decoding center, probably blocks exit of the E-site tRNA. In Edwardsiella ictaluri (strain 93-146), this protein is Small ribosomal subunit protein uS7.